An 83-amino-acid chain; its full sequence is MSSGGLLLLLGLLTLWAELTPVSSKDRPEFCELPPDRGTCMGYSQAFYYNPSQNKCLPFMFGGCKANPNNFKTLEECKRTCAA.

An N-terminal signal peptide occupies residues 1 to 24 (MSSGGLLLLLGLLTLWAELTPVSS). The BPTI/Kunitz inhibitor domain occupies 31 to 81 (CELPPDRGTCMGYSQAFYYNPSQNKCLPFMFGGCKANPNNFKTLEECKRTC). Disulfide bonds link Cys-31–Cys-81, Cys-40–Cys-64, and Cys-56–Cys-77.

This sequence belongs to the venom Kunitz-type family. Expressed by the venom gland.

Its subcellular location is the secreted. In terms of biological role, serine protease inhibitor. The protein is Kunitz-type serine protease inhibitor vestiginin-2 of Demansia vestigiata (Lesser black whip snake).